Here is a 520-residue protein sequence, read N- to C-terminus: GMP synthase [glutamine-hydrolyzing] (520 aa).

The 194-residue stretch at 12–205 (KIIVLDYGSQ…AISICGARGD (194 aa)) folds into the Glutamine amidotransferase type-1 domain. Residue Cys-89 is the Nucleophile of the active site. Catalysis depends on residues His-179 and Glu-181. Residues 206–395 (WSMDNFIDME…LGMPEEIVWR (190 aa)) form the GMPS ATP-PPase domain. 233–239 (SGGVDSS) lines the ATP pocket.

Homodimer.

The catalysed reaction is XMP + L-glutamine + ATP + H2O = GMP + L-glutamate + AMP + diphosphate + 2 H(+). It participates in purine metabolism; GMP biosynthesis; GMP from XMP (L-Gln route): step 1/1. In terms of biological role, catalyzes the synthesis of GMP from XMP. The sequence is that of GMP synthase [glutamine-hydrolyzing] from Streptococcus pyogenes serotype M6 (strain ATCC BAA-946 / MGAS10394).